We begin with the raw amino-acid sequence, 568 residues long: Estrogen receptor beta-1 (568 aa).

The modulating stretch occupies residues 12–169 (SEYAEGDSSL…SLRGKADMHY (158 aa)). NR C4-type zinc fingers lie at residues 170-190 (CAVCSDYASGYHYGVWSCEGC) and 206-230 (CPATNQCTIDKNRRKSCQACRLRKC). A DNA-binding region (nuclear receptor) is located at residues 170–235 (CAVCSDYASG…RLRKCYEVGM (66 aa)). One can recognise an NR LBD domain in the interval 292–528 (SPEELIARIM…DLLLEMLDAH (237 aa)).

The protein belongs to the nuclear hormone receptor family. NR3 subfamily. As to quaternary structure, binds DNA as a homodimer. Can form a heterodimer with ER-alpha.

Its subcellular location is the nucleus. In terms of biological role, binds estrogens with an affinity similar to that of ER-alpha, and activates expression of reporter genes containing estrogen response elements (ERE) in an estrogen-dependent manner. This Carassius auratus (Goldfish) protein is Estrogen receptor beta-1 (esr2a).